The following is a 421-amino-acid chain: Proton/sodium-glutamate symport protein (421 aa).

Topologically, residues 1-3 are cytoplasmic; it reads MRK. The chain crosses the membrane as a helical span at residues 4 to 24; that stretch reads IGLAWQIFIGLILGIIVGAIF. The Extracellular segment spans residues 25–43; that stretch reads YGNPKVAAYLQPIGDIFLR. The helical transmembrane segment at 44–64 threads the bilayer; sequence LIKMIVIPIVISSLVVGVASV. At 65-77 the chain is on the cytoplasmic side; sequence GDLKKLGKLGGKT. A helical transmembrane segment spans residues 78–98; it reads IIYFEIITTIAIVVGLLAANI. At 99–148 the chain is on the extracellular side; sequence FQPGAGVNMKSLEKTDIQSYVDTTNEVQHHSMVETFVNIVPKNIFESLST. Residues 149-169 form a helical membrane-spanning segment; sequence GDMLPIIFFSVMFGLGVAAIG. Residues 170 to 198 are Cytoplasmic-facing; the sequence is EKGKPVLQFFQGTAEAMFYVTNQIMKFAP. A helical transmembrane segment spans residues 199–219; that stretch reads FGVFALIGVTVSKFGVESLIP. At 220–222 the chain is on the extracellular side; that stretch reads LSK. The chain crosses the membrane as a helical span at residues 223–243; sequence LVIVVYATMLFFIFAVLGGVA. A topological domain (cytoplasmic) is located at residue K244. A helical membrane pass occupies residues 245–265; it reads LFGINIFHIIKILKDELILAY. Residues 266–306 are Extracellular-facing; that stretch reads STASSETVLPRIMDKMEKFGCPKAITSFVIPTGYSFNLDGS. The chain crosses the membrane as a helical span at residues 307–327; sequence TLYQALAAIFIAQLYGIDMSV. Residues 328-330 lie on the Cytoplasmic side of the membrane; sequence SQQ. 2 consecutive transmembrane segments (helical) span residues 331–351 and 352–372; these read ISLL…PGVS and FVVL…LAFI. Residues 373–421 lie on the Cytoplasmic side of the membrane; the sequence is AGIDRILDMARTAVNVIGNSLAAIIMSKWEGQYNEEKGKQYLAELQQSA.

The protein belongs to the dicarboxylate/amino acid:cation symporter (DAACS) (TC 2.A.23) family. Homotrimer.

Its subcellular location is the cell membrane. Its function is as follows. This carrier protein is part of the Na(+)-dependent, binding-protein-independent glutamate-aspartate transport system. This is Proton/sodium-glutamate symport protein (gltT) from Bacillus caldotenax.